Consider the following 410-residue polypeptide: 3-phosphoshikimate 1-carboxyvinyltransferase (410 aa).

K20, S21, and R25 together coordinate 3-phosphoshikimate. K20 serves as a coordination point for phosphoenolpyruvate. R115 contributes to the phosphoenolpyruvate binding site. 3-phosphoshikimate is bound by residues S157, S158, Q159, S183, D293, and K320. Residue Q159 coordinates phosphoenolpyruvate. The active-site Proton acceptor is the D293. Phosphoenolpyruvate is bound by residues R324, R365, and K391.

This sequence belongs to the EPSP synthase family. Monomer.

It is found in the cytoplasm. It carries out the reaction 3-phosphoshikimate + phosphoenolpyruvate = 5-O-(1-carboxyvinyl)-3-phosphoshikimate + phosphate. The protein operates within metabolic intermediate biosynthesis; chorismate biosynthesis. Its function is as follows. Catalyzes the transfer of the enolpyruvyl moiety of phosphoenolpyruvate (PEP) to the 5-hydroxyl of shikimate-3-phosphate (S3P) to produce enolpyruvyl shikimate-3-phosphate and inorganic phosphate. The polypeptide is 3-phosphoshikimate 1-carboxyvinyltransferase (Thermoplasma acidophilum (strain ATCC 25905 / DSM 1728 / JCM 9062 / NBRC 15155 / AMRC-C165)).